The chain runs to 192 residues: Phosphoheptose isomerase (192 aa).

Residues 37-192 (IAASLRDGGK…IMLIEKELAV (156 aa)) form the SIS domain. 52 to 54 (NGG) contacts substrate. Residues His61 and Glu65 each coordinate Zn(2+). Residues Glu65, 93–94 (ND), 119–121 (STS), Ser124, and Gln172 each bind substrate. Residues Gln172 and His180 each coordinate Zn(2+).

The protein belongs to the SIS family. GmhA subfamily. Homotetramer. Zn(2+) is required as a cofactor.

The protein localises to the cytoplasm. It catalyses the reaction 2 D-sedoheptulose 7-phosphate = D-glycero-alpha-D-manno-heptose 7-phosphate + D-glycero-beta-D-manno-heptose 7-phosphate. It participates in carbohydrate biosynthesis; D-glycero-D-manno-heptose 7-phosphate biosynthesis; D-glycero-alpha-D-manno-heptose 7-phosphate and D-glycero-beta-D-manno-heptose 7-phosphate from sedoheptulose 7-phosphate: step 1/1. Catalyzes the isomerization of sedoheptulose 7-phosphate in D-glycero-D-manno-heptose 7-phosphate. This is Phosphoheptose isomerase from Tolumonas auensis (strain DSM 9187 / NBRC 110442 / TA 4).